The primary structure comprises 47 residues: Packaging protein P22 (47 aa).

The chain crosses the membrane as a helical span at residues 22-42 (TGWLAFVGLIIVAIILWQQII).

Heterodimer of P20 and P22; further multimerizes as hexamers of heterodimers. Part of the dodecameric portal complex that is composed of the packaging efficiency factor P6, the DNA packaging ATPase P9, and the internal heterododecamer P20/P22 which spans the virion inner membrane.

It localises to the virion membrane. Its function is as follows. Together with P22, forms the internal part of the portal complex embeded in the virion internal membrane and which plays critical roles in genome packaging and genome ejection. Both proteins multimerize as a single ring-shaped heterdodecamer arranged around a central channel and interact with the P6/P9 external part of the portal. This is Packaging protein P22 (XXII) from Enterobacteria phage PRD1 (Bacteriophage PRD1).